Consider the following 72-residue polypeptide: DNA-directed RNA polymerase subunit Rpo10 (72 aa).

Zn(2+) contacts are provided by Cys-7, Cys-10, Cys-53, and Cys-54.

Belongs to the archaeal Rpo10/eukaryotic RPB10 RNA polymerase subunit family. As to quaternary structure, part of the RNA polymerase complex. The cofactor is Zn(2+).

It localises to the cytoplasm. It catalyses the reaction RNA(n) + a ribonucleoside 5'-triphosphate = RNA(n+1) + diphosphate. Its function is as follows. DNA-dependent RNA polymerase (RNAP) catalyzes the transcription of DNA into RNA using the four ribonucleoside triphosphates as substrates. The protein is DNA-directed RNA polymerase subunit Rpo10 of Thermoplasma volcanium (strain ATCC 51530 / DSM 4299 / JCM 9571 / NBRC 15438 / GSS1).